The following is a 156-amino-acid chain: Ribosomal RNA large subunit methyltransferase H (156 aa).

S-adenosyl-L-methionine is bound by residues Leu73, Gly104, and 123–128; that span reads LSALTL.

The protein belongs to the RNA methyltransferase RlmH family. Homodimer.

It is found in the cytoplasm. The enzyme catalyses pseudouridine(1915) in 23S rRNA + S-adenosyl-L-methionine = N(3)-methylpseudouridine(1915) in 23S rRNA + S-adenosyl-L-homocysteine + H(+). Its function is as follows. Specifically methylates the pseudouridine at position 1915 (m3Psi1915) in 23S rRNA. The sequence is that of Ribosomal RNA large subunit methyltransferase H from Shewanella sediminis (strain HAW-EB3).